Consider the following 220-residue polypeptide: Large ribosomal subunit protein uL4 (220 aa).

Positions 45–102 are disordered; that stretch reads AARQGTHKTKTRGEVRGGGRKPFRQKGTGRARQGSIRAPHYTGGGTVHGPVPRDYSQR. A compositionally biased stretch (basic residues) spans 62 to 73; that stretch reads GGRKPFRQKGTG.

The protein belongs to the universal ribosomal protein uL4 family. Part of the 50S ribosomal subunit.

One of the primary rRNA binding proteins, this protein initially binds near the 5'-end of the 23S rRNA. It is important during the early stages of 50S assembly. It makes multiple contacts with different domains of the 23S rRNA in the assembled 50S subunit and ribosome. In terms of biological role, forms part of the polypeptide exit tunnel. The polypeptide is Large ribosomal subunit protein uL4 (Corynebacterium aurimucosum (strain ATCC 700975 / DSM 44827 / CIP 107346 / CN-1) (Corynebacterium nigricans)).